A 344-amino-acid chain; its full sequence is UPF0283 membrane protein YcjF (344 aa).

3 helical membrane passes run 70 to 90 (MVMG…VQWT), 100 to 120 (VALG…GSVV), and 213 to 233 (ESTL…FIAW).

This sequence belongs to the UPF0283 family.

It localises to the cell inner membrane. The chain is UPF0283 membrane protein YcjF from Shigella dysenteriae serotype 1 (strain Sd197).